An 847-amino-acid chain; its full sequence is MAQVLHVPAPFPGTPGQASSAAFPNKEPDPPYSVETPYGYRLDLDFLKYVDDIEKGHTLRRVPVQRRPRLGSLPRGPGSWWTSTESLCSDASGDSRHSAYSYCGRGFYPQYGALETRSGTNPRVERTLLDARRRLEDQAAAPSSGGLGSLTPSAAGSTSSLAGVGLLPPTPRSSGLSTPVAPSAGHLAHVREQMAGALRKLRQLEEQVKLIPVLQVKLSVLQEEKRQLTVQLKSQKFLGHPSGTRSRSELCLDLPEAPDDPAVLETRSVGTWVRERDLGIPDGEAALVAKVAVLETQLKKALQELRAAQTQQVDLQPQAWPPPDTQVRVDTVRVVEGPREVEVAASTAAGAPAQRAQSLEPYGAGLKALATSAENTLVFRSHEVVETMCPLPTASTSNMHTAKKISITERNCTGAARMADPPPSPAEPSPSSPYPAAEPENPAPAAQDTTDRELTRPVASQDSQAAEGAGGASLGVQSALKRKEVPADPDVHQRNLQFVGINGGYESSSEDSSTAENSEHESTENEAPEPPVRVLSTAEGPQLRPLGPAVGKTSQDERQLSQESQRVPEAKVAPGPDPEEEIRMDLSPDLISACLALEKYLENPNALTERELKVAYTTVLQEWLRLACRSDAHPELVRRHLVTFRAMSARLLDYVVNIADSNGNTALHYSVSHANFPVVRQLLDSGVCQVDKLNRAGYSPIMLTALATLKTQDDIDTILQLFRLGNVNAKASQAGQTALMLAVSHGRVDVVKALLACEVDVNMQDEDGSTALMCACEHGHKEITGLLLAVPSCDISLTDRDGSTALMVALDAGQSEIASMLYSRMNIKCSFAPMSDYESPASSSAEE.

Residues 1 to 32 (MAQVLHVPAPFPGTPGQASSAAFPNKEPDPPY) are disordered. An interaction with AIFM1 region spans residues 1–72 (MAQVLHVPAP…PVQRRPRLGS (72 aa)). S19, S83, S86, S89, and S92 each carry phosphoserine. R105 carries the omega-N-methylarginine modification. The tract at residues 161-182 (LAGVGLLPPTPRSSGLSTPVAP) is disordered. A Phosphothreonine modification is found at T170. Coiled coils occupy residues 187–207 (LAHV…LEEQ) and 284–311 (EAAL…AQTQ). At T331 the chain carries Phosphothreonine. Residue S358 is modified to Phosphoserine. Disordered stretches follow at residues 414 to 473 (GAAR…GGAS) and 502 to 581 (NGGY…PEEE). Residues 420–433 (DPPPSPAEPSPSSP) show a composition bias toward pro residues. Low complexity-rich tracts occupy residues 434–446 (YPAA…APAA) and 506–516 (ESSSEDSSTAE). A Phosphoserine modification is found at S536. Residues 610 to 647 (RELKVAYTTVLQEWLRLACRSDAHPELVRRHLVTFRAM) form an ANK 0; degenerate repeat. ANK repeat units lie at residues 662–692 (NGNT…QVDK), 696–729 (AGYS…NVNA), 734–763 (AGQT…DVNM), 767–797 (DGST…DISL), and 801–831 (DGST…KCSF). Positions 665–831 (TALHYSVSHA…YSRMNIKCSF (167 aa)) are interaction with NCOA1.

As to quaternary structure, interacts (non-phosphorylated form) with NCOA1; NCOA2 AND NCOA3. Interacts with AIFM1. Interacts with ARHGDIA; the interaction is direct and may regulate the interaction of ARHGDIA with RHOA, RAC1 and CDC42. Interacts (via ANK repeats 1-5) with KIF21A. Phosphorylated by casein kinase II upon estrogen stimulation. Phosphorylation induces the release by KANK2 of NCOA1 and its translocation to the nucleus where NCOA1 can activate gene transcription. In terms of tissue distribution, expressed by podocytes in kidney glomeruli (at protein level).

The protein resides in the cytoplasm. Its subcellular location is the mitochondrion. In terms of biological role, involved in transcription regulation by sequestering in the cytoplasm nuclear receptor coactivators such as NCOA1, NCOA2 and NCOA3. Involved in regulation of caspase-independent apoptosis by sequestering the proapoptotic factor AIFM1 in mitochondria. Pro-apoptotic stimuli can induce its proteasomal degradation allowing the translocation of AIFM1 to the nucleus to induce apoptosis. Involved in the negative control of vitamin D receptor signaling pathway. Involved in actin stress fibers formation through its interaction with ARHGDIA and the regulation of the Rho signaling pathway. May thereby play a role in cell adhesion and migration, regulating for instance podocytes migration during development of the kidney. Through the Rho signaling pathway may also regulate cell proliferation. In Rattus norvegicus (Rat), this protein is KN motif and ankyrin repeat domain-containing protein 2.